The chain runs to 226 residues: Enolase-phosphatase E1 (226 aa).

The protein belongs to the HAD-like hydrolase superfamily. MasA/MtnC family. As to quaternary structure, monomer. Requires Mg(2+) as cofactor.

It catalyses the reaction 5-methylsulfanyl-2,3-dioxopentyl phosphate + H2O = 1,2-dihydroxy-5-(methylsulfanyl)pent-1-en-3-one + phosphate. It functions in the pathway amino-acid biosynthesis; L-methionine biosynthesis via salvage pathway; L-methionine from S-methyl-5-thio-alpha-D-ribose 1-phosphate: step 3/6. It participates in amino-acid biosynthesis; L-methionine biosynthesis via salvage pathway; L-methionine from S-methyl-5-thio-alpha-D-ribose 1-phosphate: step 4/6. Functionally, bifunctional enzyme that catalyzes the enolization of 2,3-diketo-5-methylthiopentyl-1-phosphate (DK-MTP-1-P) into the intermediate 2-hydroxy-3-keto-5-methylthiopentenyl-1-phosphate (HK-MTPenyl-1-P), which is then dephosphorylated to form the acireductone 1,2-dihydroxy-3-keto-5-methylthiopentene (DHK-MTPene). In Shewanella putrefaciens (strain CN-32 / ATCC BAA-453), this protein is Enolase-phosphatase E1.